The primary structure comprises 550 residues: Hydroxylamine reductase (550 aa).

Residues Cys3, Cys6, Cys18, and Cys25 each coordinate [2Fe-2S] cluster. Hybrid [4Fe-2O-2S] cluster is bound by residues His249, Glu273, Cys317, Cys405, Cys433, Cys458, Glu492, and Lys494. Residue Cys405 is modified to Cysteine persulfide.

This sequence belongs to the HCP family. [2Fe-2S] cluster serves as cofactor. It depends on hybrid [4Fe-2O-2S] cluster as a cofactor.

Its subcellular location is the cytoplasm. It catalyses the reaction A + NH4(+) + H2O = hydroxylamine + AH2 + H(+). Functionally, catalyzes the reduction of hydroxylamine to form NH(3) and H(2)O. The protein is Hydroxylamine reductase of Pectobacterium carotovorum subsp. carotovorum (strain PC1).